The chain runs to 481 residues: DNA primase DnaG (481 aa).

Positions 169 to 243 (DAILVVEGRA…DVDYVARAPD (75 aa)) constitute a Toprim domain. Residues Glu-175, Asp-217, and Asp-219 each coordinate Mg(2+). The disordered stretch occupies residues 275–393 (RRRNKLAAQA…ARKEREPSEF (119 aa)). Low complexity predominate over residues 281-309 (AAQAAEKQAQAEAAQKAEAPAAAAPVQPQ). Residues 312–393 (YQQKEYPQRE…ARKEREPSEF (82 aa)) show a composition bias toward basic and acidic residues.

It belongs to the archaeal DnaG primase family. Forms a ternary complex with MCM helicase and DNA. Component of the archaeal exosome complex. Mg(2+) serves as cofactor.

The catalysed reaction is ssDNA + n NTP = ssDNA/pppN(pN)n-1 hybrid + (n-1) diphosphate.. Functionally, RNA polymerase that catalyzes the synthesis of short RNA molecules used as primers for DNA polymerase during DNA replication. Also part of the exosome, which is a complex involved in RNA degradation. Acts as a poly(A)-binding protein that enhances the interaction between heteromeric, adenine-rich transcripts and the exosome. The chain is DNA primase DnaG from Methanocella arvoryzae (strain DSM 22066 / NBRC 105507 / MRE50).